The sequence spans 93 residues: U8-theraphotoxin-Hs1b (93 aa).

Positions 1-18 (MKAILLLAIFSVLTVAIC) are cleaved as a signal peptide. 4 cysteine pairs are disulfide-bonded: C40/C54, C40/C81, C53/C66, and C84/C91.

The protein belongs to the neurotoxin 27 (Jztx-72) family. ICK-72 subfamily. As to expression, expressed by the venom gland.

It localises to the secreted. In terms of biological role, probable neurotoxin with ion channel impairing activity. The chain is U8-theraphotoxin-Hs1b from Cyriopagopus schmidti (Chinese bird spider).